We begin with the raw amino-acid sequence, 213 residues long: FMN-dependent NADH:quinone oxidoreductase (213 aa).

Serine 17 to serine 19 serves as a coordination point for FMN.

The protein belongs to the azoreductase type 1 family. Homodimer. It depends on FMN as a cofactor.

The catalysed reaction is 2 a quinone + NADH + H(+) = 2 a 1,4-benzosemiquinone + NAD(+). It carries out the reaction N,N-dimethyl-1,4-phenylenediamine + anthranilate + 2 NAD(+) = 2-(4-dimethylaminophenyl)diazenylbenzoate + 2 NADH + 2 H(+). Its function is as follows. Quinone reductase that provides resistance to thiol-specific stress caused by electrophilic quinones. Functionally, also exhibits azoreductase activity. Catalyzes the reductive cleavage of the azo bond in aromatic azo compounds to the corresponding amines. The protein is FMN-dependent NADH:quinone oxidoreductase of Ruminiclostridium cellulolyticum (strain ATCC 35319 / DSM 5812 / JCM 6584 / H10) (Clostridium cellulolyticum).